The following is a 910-amino-acid chain: Protein translocase subunit SecA (910 aa).

ATP contacts are provided by residues glutamine 86, 104-108 (GEGKT), and aspartate 499. Residues cysteine 894, cysteine 896, cysteine 905, and histidine 906 each contribute to the Zn(2+) site.

The protein belongs to the SecA family. As to quaternary structure, monomer and homodimer. Part of the essential Sec protein translocation apparatus which comprises SecA, SecYEG and auxiliary proteins SecDF-YajC and YidC. It depends on Zn(2+) as a cofactor.

The protein localises to the cell inner membrane. It is found in the cytoplasm. The enzyme catalyses ATP + H2O + cellular proteinSide 1 = ADP + phosphate + cellular proteinSide 2.. Functionally, part of the Sec protein translocase complex. Interacts with the SecYEG preprotein conducting channel. Has a central role in coupling the hydrolysis of ATP to the transfer of proteins into and across the cell membrane, serving both as a receptor for the preprotein-SecB complex and as an ATP-driven molecular motor driving the stepwise translocation of polypeptide chains across the membrane. This Rickettsia bellii (strain RML369-C) protein is Protein translocase subunit SecA.